Consider the following 49-residue polypeptide: uncharacterized protein (49 aa).

The helical transmembrane segment at 5 to 27 threads the bilayer; that stretch reads ILEILSAFIRILFKLLYCWALFF.

It localises to the membrane. This is an uncharacterized protein from Saccharomyces cerevisiae (strain ATCC 204508 / S288c) (Baker's yeast).